The chain runs to 306 residues: MSRAMDITRIPGSAIGAVVAGADFSGTIDDTQVEEIWQALDQHLVLVFRGHKDPSNDDLLMFARRFGHVPKTGLTTGASPDHNEILLISNILDENGQKIGVGNAEWMDWHTDYSFRPRVSRIGFLAAVELPPSGGGQTLFTDMYTAYESLPDDLRQRLHSYRARHSLRSGYEDVIEEEYQGEVSIEGPTAKPFVAPEDGTATVHQLIARNPRTGRRAVYANPLNTKRILELDVTSSKEVLQQLFAKPGEPELTYAHEWLPGDIVMWDQLGTVHAKRAFDPTERRLLRKVVTIFDDPAEPWHPEDAA.

Fe cation-binding residues include His-110 and Asp-112. Residues Thr-138 and Trp-258 each coordinate 2-oxoglutarate. His-273 serves as a coordination point for Fe cation. Arg-284 is a 2-oxoglutarate binding site.

The protein belongs to the TfdA dioxygenase family. Requires Fe(2+) as cofactor.

It carries out the reaction pentalenolactone D + 2 2-oxoglutarate + 2 O2 = pentalenolactone F + 2 succinate + 2 CO2 + H2O. It functions in the pathway antibiotic biosynthesis; neopentalenolactone biosynthesis. Activated by ascorbate. Functionally, catalyzes the Fe(2+) and alpha-ketoglutarate-dependent oxidation of pentalenolactone D to pentalenolactone F. Also able to catalyze the oxidation of pentalenolactone D to pentalenolactone E. In presence of neopentalenolactone D, mediates production of PL308 and possibly neopentalenolactone E. The chain is Pentalenolactone F synthase (ptlD) from Streptomyces avermitilis (strain ATCC 31267 / DSM 46492 / JCM 5070 / NBRC 14893 / NCIMB 12804 / NRRL 8165 / MA-4680).